A 465-amino-acid polypeptide reads, in one-letter code: Hexokinase type 1 (465 aa).

The region spanning 8-447 (EEDFPEVYKV…CGVGAAIMAG (440 aa)) is the Hexokinase domain. The tract at residues 65–197 (TGRERGQFLA…EISVDVMGII (133 aa)) is hexokinase small subdomain. Lys88 is an ATP binding site. The glucose-binding stretch occupies residues 139–165 (PLGIAFAFTLKKLALDVGILVSWTKEF). Residues 198 to 436 (NVGAGSLLAL…YNFEFVITQD (239 aa)) are hexokinase large subdomain.

This sequence belongs to the hexokinase family.

The catalysed reaction is a D-hexose + ATP = a D-hexose 6-phosphate + ADP + H(+). The enzyme catalyses D-mannose + ATP = D-mannose 6-phosphate + ADP + H(+). It carries out the reaction D-fructose + ATP = D-fructose 6-phosphate + ADP + H(+). It catalyses the reaction D-glucose + ATP = D-glucose 6-phosphate + ADP + H(+). It participates in carbohydrate metabolism; hexose metabolism. Its pathway is carbohydrate degradation; glycolysis; D-glyceraldehyde 3-phosphate and glycerone phosphate from D-glucose: step 1/4. In terms of biological role, catalyzes the phosphorylation of various hexoses to hexose 6-phosphate. This Drosophila melanogaster (Fruit fly) protein is Hexokinase type 1 (Hex-t1).